Consider the following 86-residue polypeptide: Beta-toxin CsEI (86 aa).

Positions 1 to 19 (MNSLLMITACLVLIGTVWA) are cleaved as a signal peptide. Residues 20 to 84 (KDGYLVEKTG…TWPLPNKTCG (65 aa)) form the LCN-type CS-alpha/beta domain. 4 disulfides stabilise this stretch: cysteine 30-cysteine 83, cysteine 34-cysteine 59, cysteine 43-cysteine 64, and cysteine 47-cysteine 66. Cysteine 83 is modified (cysteine amide).

This sequence belongs to the long (4 C-C) scorpion toxin superfamily. Sodium channel inhibitor family. Beta subfamily. In terms of tissue distribution, expressed by the venom gland.

It localises to the secreted. In terms of biological role, beta toxins bind voltage-independently at site-4 of sodium channels (Nav) and shift the voltage of activation toward more negative potentials thereby affecting sodium channel activation and promoting spontaneous and repetitive firing. Affects channels from chicken and frog. The polypeptide is Beta-toxin CsEI (Centruroides sculpturatus (Arizona bark scorpion)).